The primary structure comprises 492 residues: Glutamate--cysteine ligase A, chloroplastic (492 aa).

The cysteines at positions 156 and 376 are disulfide-linked.

The protein belongs to the carboxylate-amine ligase family. Glutamate--cysteine ligase type 2 subfamily. In terms of assembly, homodimer or monomer when oxidized or reduced, respectively. In terms of processing, the Cys-156-Cys-376 disulfide bridge is known to modulate the enzyme activity according to the redox status. The oxidized form constitutes the active enzyme.

The protein localises to the plastid. The protein resides in the chloroplast. It carries out the reaction L-cysteine + L-glutamate + ATP = gamma-L-glutamyl-L-cysteine + ADP + phosphate + H(+). It functions in the pathway sulfur metabolism; glutathione biosynthesis; glutathione from L-cysteine and L-glutamate: step 1/2. The protein is Glutamate--cysteine ligase A, chloroplastic (GSH1-1) of Oryza sativa subsp. indica (Rice).